The primary structure comprises 444 residues: Nuclear envelope integral membrane protein 1 (444 aa).

A signal peptide spans 1–43 (MAGGMKVAVSPAVGPGPWGSGVGGGGTVRLLLILSGCLVYGTA). N125 carries N-linked (GlcNAc...) asparagine glycosylation. The next 5 helical transmembrane spans lie at 161-181 (PKLFLVFLLGLMLFFCGDLLS), 186-206 (FYYSTGMSVGIVASLLIIIFI), 216-236 (PIYVILVGGWSFSLYLIQLVF), 245-265 (CYWQYLLSYILTVGFMSFAVC), and 289-309 (LCFMYSGIQIPHIALAIIIIA). Residues 186-297 (FYYSTGMSVG…GLCFMYSGIQ (112 aa)) form an a; required for its colocalization with lamins at the nuclear envelope region. The b; required for interaction with RAN-GTP stretch occupies residues 336–405 (PVPPRLLTEE…LTPNEVSVHE (70 aa)). Residues 336–444 (PVPPRLLTEE…PAITQNNFLT (109 aa)) form a required for nuclear localization region. Phosphoserine is present on residues S368, S424, and S425.

It belongs to the NEMP family. In terms of assembly, homooligomer. Interacts with RAN-GTP. Interacts with EMD. Phosphorylation may regulate its interaction with RAN-GTP.

It is found in the nucleus inner membrane. The protein resides in the nucleus envelope. Its function is as follows. Together with EMD, contributes to nuclear envelope stiffness in germ cells. Required for female fertility. Essential for normal erythropoiesis. Required for efficient nuclear envelope opening and enucleation during the late stages of erythroblast maturation. The protein is Nuclear envelope integral membrane protein 1 (NEMP1) of Pongo abelii (Sumatran orangutan).